Reading from the N-terminus, the 168-residue chain is Photosystem I assembly protein Ycf3 (168 aa).

TPR repeat units lie at residues 35–68, 72–105, and 120–153; these read AFTYYRDGMSAQSEGNYAEALQNYYEATRPEIDP, SYILYNIGLIHTSNGEHTKALEYYFRALERNPFL, and GEQAIRQGDSEIAEAWSDQAAEYWKQAIALTPGN.

This sequence belongs to the Ycf3 family.

It localises to the plastid. The protein localises to the chloroplast thylakoid membrane. Its function is as follows. Essential for the assembly of the photosystem I (PSI) complex. May act as a chaperone-like factor to guide the assembly of the PSI subunits. In Illicium oligandrum (Star anise), this protein is Photosystem I assembly protein Ycf3.